Reading from the N-terminus, the 103-residue chain is Large ribosomal subunit protein bL21 (103 aa).

The protein belongs to the bacterial ribosomal protein bL21 family. In terms of assembly, part of the 50S ribosomal subunit. Contacts protein L20.

This protein binds to 23S rRNA in the presence of protein L20. The protein is Large ribosomal subunit protein bL21 of Alkaliphilus oremlandii (strain OhILAs) (Clostridium oremlandii (strain OhILAs)).